The following is a 330-amino-acid chain: Aspartate--ammonia ligase (330 aa).

It belongs to the class-II aminoacyl-tRNA synthetase family. AsnA subfamily.

It localises to the cytoplasm. The enzyme catalyses L-aspartate + NH4(+) + ATP = L-asparagine + AMP + diphosphate + H(+). It participates in amino-acid biosynthesis; L-asparagine biosynthesis; L-asparagine from L-aspartate (ammonia route): step 1/1. In Serratia proteamaculans (strain 568), this protein is Aspartate--ammonia ligase.